Reading from the N-terminus, the 125-residue chain is Large ribosomal subunit protein bL12 (125 aa).

The protein belongs to the bacterial ribosomal protein bL12 family. As to quaternary structure, homodimer. Part of the ribosomal stalk of the 50S ribosomal subunit. Forms a multimeric L10(L12)X complex, where L10 forms an elongated spine to which 2 to 4 L12 dimers bind in a sequential fashion. Binds GTP-bound translation factors.

In terms of biological role, forms part of the ribosomal stalk which helps the ribosome interact with GTP-bound translation factors. Is thus essential for accurate translation. This Azoarcus sp. (strain BH72) protein is Large ribosomal subunit protein bL12.